Reading from the N-terminus, the 513-residue chain is OBERON-like protein (513 aa).

The PHD-type zinc finger occupies 166–235; sequence NGFCNLCMCV…VFRCQACSXT (70 aa). A coiled-coil region spans residues 372–469; the sequence is RELADKAREA…LYEKIKLQES (98 aa). Positions 493–513 are disordered; sequence YNGPPKADSQSNDCHPFRTNP. Residues 500 to 513 are compositionally biased toward polar residues; the sequence is DSQSNDCHPFRTNP.

In terms of assembly, self-interacts and probably forms heteromers. Binds to VPg of pea seed borne mosaic virus (PSbMV), turnip mosaic virus (TuMV) and lettuce mosaic virus (LMV), but not with VPg of tobacco etch virus (TEV), cowpea mosaic virus (CPMV), tomato black ring virus (TBRV) and grapevine fan leaf virus (GFLV).

The protein resides in the nucleus. In terms of biological role, required for the maintenance and/or establishment of both the shoot and root meristems, probably by controlling the expression of the meristem genes and of genes required for auxin responses. Involved in the development of the basal pole and in auxin-mediated root and vascular development in the embryo. Confers sensitivity to turnip mosaic virus (TuMV) probably by promoting viral movement and multiplication via interaction with TuMV VPg. The sequence is that of OBERON-like protein (PVIP) from Pisum sativum (Garden pea).